Here is a 592-residue protein sequence, read N- to C-terminus: Guanylate-binding protein 1 (592 aa).

Residues 1 to 311 (MASEIHMTGP…NAISSGDLPC (311 aa)) are GTPase domain (Globular). The GB1/RHD3-type G domain maps to 35–278 (TQPMVVVAIV…FCSYIFSNSK (244 aa)). GTP is bound by residues 45–52 (GLYRTGKS), 67–69 (LGS), and 97–101 (DTEGL). Serine 156 carries the post-translational modification Phosphoserine; by PIM1. (Microbial infection) Glycyl lysine isopeptide (Lys-Gly) (interchain with G-Cter in ubiquitin) cross-links involve residues lysine 207, lysine 209, lysine 210, lysine 382, lysine 562, lysine 567, lysine 573, and lysine 587. Cysteine 589 carries the post-translational modification Cysteine methyl ester. A lipid anchor (S-farnesyl cysteine) is attached at cysteine 589. Threonine 590 carries the post-translational modification Phosphothreonine; by PIM1. The propeptide at 590–592 (TIS) is removed in mature form.

The protein belongs to the TRAFAC class dynamin-like GTPase superfamily. GB1/RHD3 GTPase family. GB1 subfamily. As to quaternary structure, homodimer; homodimerization occurs upon GTP-binding and is required for the second hydrolysis step from GDP to GMP. Undergoes conformational changes and oligomerization upon GTP-binding and hydrolysis. Heterodimer with other family members, including GBP2, GBP3, GBP4 and GBP5. Dimerization regulates subcellular location to membranous structures. Interacts with SQSTM1. Interacts (when phosphorylated) with 14-3-3 protein sigma (SFN); leading to GBP1 retention in the cytosol and inactivation. In terms of processing, isoprenylation is required for proper subcellular location. Phosphorylated at Ser-156 by PIM1 in absence of infection, inhibits GBP1: phosphorylation promotes interaction with 14-3-3 protein sigma (SFN), leading to GBP1 retention in the cytosol. Dephosphorylated in response to infection, liberating GBP1. Post-translationally, (Microbial infection) Ubiquitinated by S.flexneri IpaH9.8, leading to its degradation by the proteasome, thereby preventing its ability to promote host defense against bacterial infection.

Its subcellular location is the cytoplasmic vesicle membrane. The protein resides in the golgi apparatus membrane. The protein localises to the cell membrane. It is found in the cytoplasm. It localises to the cytosol. Its subcellular location is the secreted. It carries out the reaction GTP + H2O = GDP + phosphate + H(+). It catalyses the reaction GDP + H2O = GMP + phosphate + H(+). Functionally, interferon (IFN)-inducible GTPase that plays important roles in innate immunity against a diverse range of bacterial, viral and protozoan pathogens. Hydrolyzes GTP to GMP in two consecutive cleavage reactions: GTP is first hydrolyzed to GDP and then to GMP in a processive manner. Following infection, recruited to the pathogen-containing vacuoles or vacuole-escaped bacteria and promotes both inflammasome assembly and autophagy. Acts as a positive regulator of inflammasome assembly by facilitating the detection of inflammasome ligands from pathogens. Involved in the lysis of pathogen-containing vacuoles, releasing pathogens into the cytosol. Following pathogen release in the cytosol, forms a protein coat in a GTPase-dependent manner that encapsulates pathogens and promotes the detection of ligands by pattern recognition receptors. Plays a key role in inflammasome assembly in response to infection by Gram-negative bacteria: following pathogen release in the cytosol, forms a protein coat that encapsulates Gram-negative bacteria and directly binds to lipopolysaccharide (LPS), disrupting the O-antigen barrier and unmasking lipid A that is that detected by the non-canonical inflammasome effector CASP4/CASP11. Also promotes recruitment of proteins that mediate bacterial cytolysis, leading to release double-stranded DNA (dsDNA) that activates the AIM2 inflammasome. Involved in autophagy by regulating bacteriolytic peptide generation via its interaction with ubiquitin-binding protein SQSTM1, which delivers monoubiquitinated proteins to autolysosomes for the generation of bacteriolytic peptides. Confers protection to several pathogens, including the bacterial pathogens L.monocytogenes and M.bovis BCG as well as the protozoan pathogen T.gondii. Exhibits antiviral activity against influenza virus. The chain is Guanylate-binding protein 1 from Homo sapiens (Human).